We begin with the raw amino-acid sequence, 243 residues long: Vesicle-associated membrane protein-associated protein B (243 aa).

N-acetylalanine is present on A2. Residues 2–218 (AKVEQVLSLE…AALAATGKEE (217 aa)) lie on the Cytoplasmic side of the membrane. Positions 7 to 124 (VLSLEPQHEL…MDSKLRCVFE (118 aa)) constitute an MSP domain. Phosphoserine is present on S146. A Glycyl lysine isopeptide (Lys-Gly) (interchain with G-Cter in SUMO1) cross-link involves residue K147. Phosphoserine occurs at positions 156 and 159. The stretch at 161–196 (LDDTEVKKVMEECRRLQGEVQRLREESRQLKEEDGL) forms a coiled coil. S206 is modified (phosphoserine). The chain crosses the membrane as a helical; Anchor for type IV membrane protein span at residues 219–239 (GLSARLLALVVLFFIVGVIIG).

It belongs to the VAMP-associated protein (VAP) (TC 9.B.17) family. In terms of assembly, homodimer, and heterodimer with VAPA. Interacts with VAMP1 and VAMP2. Interacts (via MSP domain) with ZFYVE27. Interacts with RMDN3. Interacts with KIF5A in a ZFYVE27-dependent manner. Interacts (via MSP domain) with STARD3 (via phospho-FFAT motif). Interacts with STARD3NL (via FFAT motif). Interacts with CERT1. Interacts with PLEKHA3 and SACM1L to form a ternary complex. Interacts with VPS13A (via FFAT motif). Interacts with RB1CC1 (via phosphorylated FFAT motif), MIGA2 (via phosphorylated FFAT motif), RMDN3 (via phosphorylated FFAT motif), OSBPL1A (via FFAT motif), KCNB1 (via phosphorylated FFAT motif) and KCNB2 (via phosphorylated FFAT motif). Interacts (via MSP domain) with WDR44 (via FFAT motif); the interactions connect the endoplasmic reticulum (ER) with the endosomal tubule.

It localises to the endoplasmic reticulum membrane. Its function is as follows. Endoplasmic reticulum (ER)-anchored protein that mediates the formation of contact sites between the ER and endosomes via interaction with FFAT motif-containing proteins such as STARD3 or WDR44. Interacts with STARD3 in a FFAT motif phosphorylation dependent manner. Via interaction with WDR44 participates in neosynthesized protein export. Participates in the endoplasmic reticulum unfolded protein response (UPR) by inducing ERN1/IRE1 activity. Involved in cellular calcium homeostasis regulation. The protein is Vesicle-associated membrane protein-associated protein B of Mus musculus (Mouse).